Here is a 545-residue protein sequence, read N- to C-terminus: Pseudouridylate synthase RPUSD2 (545 aa).

Residues 48–121 (GLRASHQQNG…PPPKKRRTGV (74 aa)) are disordered. At serine 68 the chain carries Phosphoserine. Residue aspartate 274 is part of the active site. Threonine 477 carries the post-translational modification Phosphothreonine.

This sequence belongs to the pseudouridine synthase RluA family.

The catalysed reaction is a uridine in mRNA = a pseudouridine in mRNA. Its function is as follows. Pseudouridine synthase that catalyzes pseudouridylation of mRNAs. In Homo sapiens (Human), this protein is Pseudouridylate synthase RPUSD2.